Here is a 385-residue protein sequence, read N- to C-terminus: Glucans biosynthesis protein C (385 aa).

10 helical membrane-spanning segments follow: residues 17–37 (AWLM…SHTW), 60–80 (MQVF…RYPL), 91–111 (VGIP…IMLQ), 137–157 (ISHL…VWIF), 173–193 (KFSM…YAVI), 212–232 (FIVM…LAFI), 239–259 (LFTT…VAYL), 274–294 (TESV…FSFG), 311–331 (ASLF…AYIT), and 338–358 (WLGF…LYEI).

It belongs to the acyltransferase 3 family. OpgC subfamily.

Its subcellular location is the cell membrane. It functions in the pathway glycan metabolism; osmoregulated periplasmic glucan (OPG) biosynthesis. Functionally, necessary for the succinyl substitution of periplasmic glucans. Could catalyze the transfer of succinyl residues from the cytoplasmic side of the membrane to the nascent glucan backbones on the periplasmic side of the membrane. This is Glucans biosynthesis protein C from Escherichia coli O17:K52:H18 (strain UMN026 / ExPEC).